Here is a 1759-residue protein sequence, read N- to C-terminus: Zinc finger protein castor homolog 1 (1759 aa).

Disordered stretches follow at residues 1 to 26 and 46 to 175; these read MDLG…PKRK and KRAD…SSLR. Basic and acidic residues-rich tracts occupy residues 77–88 and 137–160; these read PRSEEDKRRAVI and EEPS…KEDS. The span at 161-171 shows a compositional bias: polar residues; the sequence is GPSTRQASGEA. Lys-288 is covalently cross-linked (Glycyl lysine isopeptide (Lys-Gly) (interchain with G-Cter in SUMO2)). Residues 374 to 420 are disordered; sequence SKYDVRGIQKPGPAKVPPTPSLAPAPLASVPSAPSAPGPGPEPPASL. Residues 387-396 are compositionally biased toward pro residues; sequence AKVPPTPSLA. The segment covering 397 to 406 has biased composition (low complexity); that stretch reads PAPLASVPSA. Over residues 407-417 the composition is skewed to pro residues; sequence PSAPGPGPEPP. 3 C2H2-type zinc fingers span residues 551 to 575, 610 to 634, and 668 to 692; these read YHCM…ENFH, FHCR…KSYH, and FHCI…KRKH. Disordered stretches follow at residues 686 to 723, 736 to 776, 824 to 843, and 889 to 949; these read TSHK…SSND, SSLS…SGLL, VSSG…VASG, and ATFD…AVPA. A compositionally biased stretch (basic residues) spans 687–698; that stretch reads SHKRKHERRHIR. Over residues 699-712 the composition is skewed to low complexity; that stretch reads SSGALGLPPSLLGA. Phosphoserine occurs at positions 720 and 721. The segment covering 736–764 has biased composition (low complexity); that stretch reads SSLSASPTSQQSSASLAAATAATEAGPSA. A compositionally biased stretch (basic and acidic residues) spans 925 to 939; sequence ASQDRSLDLTVKEPS. Lys-975 participates in a covalent cross-link: Glycyl lysine isopeptide (Lys-Gly) (interchain with G-Cter in SUMO2). Ser-981 is modified (phosphoserine). Residues 1031-1055 form a C2H2-type 4 zinc finger; sequence FHCVVEECGALFSTLDGAIKHANFH. The segment at 1067-1111 is disordered; the sequence is TEAAFPASAAETKPPMAPSSPPVPPVTTATVSSLEGPAPSPASVP. Residues 1081 to 1091 show a composition bias toward pro residues; the sequence is PMAPSSPPVPP. Residues 1300 to 1324 form a C2H2-type 5 zinc finger; sequence FHCIREGCQFSFLLKHQMTSHARKH. Residues 1367–1392 form a disordered region; sequence ESSTMDRSCSSTPVGNESTAAGNTIS. 3 C2H2-type zinc fingers span residues 1457–1481, 1515–1537, and 1571–1595; these read YHCT…AQHH, FHCL…RKHH, and FHCT…KRKH. 2 disordered regions span residues 1589-1620 and 1643-1736; these read DSHK…DGSL and LGDA…AGAR. Over residues 1655 to 1673 the composition is skewed to low complexity; sequence AAPGPREGAAAAAAAAGES. A compositionally biased stretch (acidic residues) spans 1674-1723; it reads SQEDEEEELELPEEEAEDDEDEDDDEDDDDEDDDEDDDDEDLRTDSEESL. Low complexity predominate over residues 1724–1736; it reads PEAAAEAAGAGAR.

In terms of tissue distribution, expressed in heart, lung, skeletal muscle, pancreas, testis, small intestine, and stomach, but it is not detectable in the adult brain.

Its subcellular location is the nucleus. Transcriptional activator. Involved in vascular assembly and morphogenesis through direct transcriptional regulation of EGFL7. The polypeptide is Zinc finger protein castor homolog 1 (CASZ1) (Homo sapiens (Human)).